The chain runs to 402 residues: S-adenosylmethionine synthase (402 aa).

Residue Gly137–Asp142 participates in ATP binding.

Belongs to the AdoMet synthase 2 family. Mg(2+) serves as cofactor.

It catalyses the reaction L-methionine + ATP + H2O = S-adenosyl-L-methionine + phosphate + diphosphate. It participates in amino-acid biosynthesis; S-adenosyl-L-methionine biosynthesis; S-adenosyl-L-methionine from L-methionine: step 1/1. Its function is as follows. Catalyzes the formation of S-adenosylmethionine from methionine and ATP. The chain is S-adenosylmethionine synthase from Pyrobaculum neutrophilum (strain DSM 2338 / JCM 9278 / NBRC 100436 / V24Sta) (Thermoproteus neutrophilus).